The chain runs to 473 residues: H(+)/Cl(-) exchange transporter ClcA (473 aa).

Residues 1–32 (MKTDTSTFLAQQIVRLRRRDQIRRLMQRDKTP) are Cytoplasmic-facing. The helical transmembrane segment at 33 to 69 (LAILFMAAVVGTLTGLVGVAFEKAVSWVQNMRIGALV) threads the bilayer. Over 70–76 (QVADHAF) the chain is Periplasmic. The helical transmembrane segment at 77–100 (LLWPLAFILSALLAMVGYFLVRKF) threads the bilayer. The short motif at 106 to 110 (GSGIP) is the Selectivity filter part_1 element. Position 107 (Ser107) interacts with chloride. The helical intramembrane region spans 109–116 (IPEIEGAL). The Cytoplasmic segment spans residues 117–123 (EELRPVR). The next 2 membrane-spanning stretches (helical) occupy residues 124 to 141 (WWRVLPVKFIGGMGTLGA) and 148 to 166 (EGPTVQIGGNLGRMVLDVF). Residues 146–150 (GREGP) carry the Selectivity filter part_2 motif. Residues 167–176 (RMRSAEARHT) are Cytoplasmic-facing. 2 consecutive intramembrane regions (helical) follow at residues 177-189 (LLATGAAAGLSAA) and 193-201 (PLAGILFII). The Cytoplasmic segment spans residues 202-214 (EEMRPQFRYNLIS). Residues 215-232 (IKAVFTGVIMSSIVFRIF) form a helical membrane-spanning segment. Over 233–252 (NGEAPIIEVGKLSDAPVNTL) the chain is Periplasmic. The helical transmembrane segment at 253-281 (WLYLILGIIFGCVGPVFNSLVLRTQDMFQ) threads the bilayer. Topologically, residues 282–287 (RFHGGE) are cytoplasmic. A helical transmembrane segment spans residues 288-309 (IKKWVLMGGAIGGLCGILGLIE). Residues 310 to 329 (PEAAGGGFNLIPIAAAGNFS) are Periplasmic-facing. Helical transmembrane passes span 330 to 349 (VGLLLFIFITRVVTTLLCFS) and 355 to 376 (GIFAPMLALGTLLGTAFGMAAA). The Selectivity filter part_3 signature appears at 355–359 (GIFAP). Chloride-binding residues include Ile356 and Phe357. Topologically, residues 377-386 (VLFPQYHLEA) are periplasmic. An intramembrane region (helical) is located at residues 387-401 (GTFAIAGMGALMAAS). The note=Loop between two helices intramembrane region spans 402 to 404 (VRA). An intramembrane region (helical) is located at residues 405-416 (PLTGIVLVLEMT). The segment at residues 417 to 421 (DNYQL) is an intramembrane region (note=Loop between two helices). A helical transmembrane segment spans residues 422 to 438 (ILPMIITCLGATLLAQF). Residues 439–473 (LGGKPLYSTILARTLAKQDAEQAAKNQNASAGENT) lie on the Cytoplasmic side of the membrane. Position 445 (Tyr445) interacts with chloride.

It belongs to the chloride channel (TC 2.A.49) family. ClcA subfamily. As to quaternary structure, homodimer.

Its subcellular location is the cell inner membrane. It catalyses the reaction 2 chloride(in) + H(+)(out) = 2 chloride(out) + H(+)(in). Functionally, proton-coupled chloride transporter. Functions as antiport system and exchanges two chloride ions for 1 proton. Probably acts as an electrical shunt for an outwardly-directed proton pump that is linked to amino acid decarboxylation, as part of the extreme acid resistance (XAR) response. The sequence is that of H(+)/Cl(-) exchange transporter ClcA from Salmonella choleraesuis (strain SC-B67).